A 599-amino-acid chain; its full sequence is MVKHQPLQYYEPQLCLSCLTGIYGCRWKRYQRSHDDTTKWERLWFLILTSSFFLTLVWFYFWWEVHNDYNEINWFLYNRMGYWSDWSIPILVTTAAGFTYITVLLILALCHIAVGQQMNLHWLHKIGLMTTLITTVVTMSSIAQLWDDEWEMVFISLQATAPFLHIGALAAVTALSWLIAGQFARMEKATSQMLMVTAYLAVVVALYLVPLTISSPCIMEKKALGPKPAIIGHRGAPMLAPENTLMSFQKAVEQKIYGVQADVILSYDGVPFLMHDKTLRRTTNVEEVFPGRAYEHSSMFNWTDLEMLNAGEWFLRNDPFWTAGSLSRSDYLEAANQSVCKLADMLEVIKDNTSLILNFQDLPPDHPYYTSYINITLKTILASGIQQQAVMWLPDTERQLVRQIAPAFQQTSGLKLDAERLREKGIVKLNLRYTKVTNEDVRDYMAANLSVNLYTVNEPWLYSILWCTGVPSVTSDSSHVLRKVPFPIWLMPPDEYRLIWITSDLISFIIIVGVFIFQNYHNDQWRLGSIRTYNPEQIMLSAAVRRSSRDVKIMKEKLIFSEINNGVETTDELSLCSENGYANEMVTPTDHRDTRLRMN.

Topologically, residues 1–42 (MVKHQPLQYYEPQLCLSCLTGIYGCRWKRYQRSHDDTTKWER) are cytoplasmic. 2 disulfide bridges follow: Cys-15–Cys-18 and Cys-25–Cys-576. A helical transmembrane segment spans residues 43–63 (LWFLILTSSFFLTLVWFYFWW). The Extracellular portion of the chain corresponds to 64–87 (EVHNDYNEINWFLYNRMGYWSDWS). A helical membrane pass occupies residues 88 to 108 (IPILVTTAAGFTYITVLLILA). The Cytoplasmic portion of the chain corresponds to 109-125 (LCHIAVGQQMNLHWLHK). Residues 126–146 (IGLMTTLITTVVTMSSIAQLW) traverse the membrane as a helical segment. Residues 147–160 (DDEWEMVFISLQAT) lie on the Extracellular side of the membrane. The chain crosses the membrane as a helical span at residues 161 to 181 (APFLHIGALAAVTALSWLIAG). The Cytoplasmic portion of the chain corresponds to 182–192 (QFARMEKATSQ). Residues 193 to 213 (MLMVTAYLAVVVALYLVPLTI) form a helical membrane-spanning segment. Over 214–497 (SSPCIMEKKA…IWLMPPDEYR (284 aa)) the chain is Extracellular. The GP-PDE domain maps to 228–485 (PAIIGHRGAP…DSSHVLRKVP (258 aa)). Asn-301, Asn-336, Asn-352, Asn-374, and Asn-448 each carry an N-linked (GlcNAc...) asparagine glycan. The chain crosses the membrane as a helical span at residues 498 to 518 (LIWITSDLISFIIIVGVFIFQ). The Cytoplasmic portion of the chain corresponds to 519-599 (NYHNDQWRLG…DHRDTRLRMN (81 aa)).

Belongs to the glycerophosphoryl diester phosphodiesterase family. Interacts with PRDX1; forms a mixed-disulfide with PRDX1, leading to disrupt intramolecular disulfide bond between Cys-25 and Cys-576. Post-translationally, intramolecular disulfide bond between Cys-25 and Cys-576 is reduced by PRDX1. Detected in mature motor neurons.

The protein resides in the endomembrane system. Its subcellular location is the cytoplasm. The protein localises to the perinuclear region. It localises to the cell projection. It is found in the growth cone. It carries out the reaction a 1,2-diacyl-sn-glycero-3-phospho-(1D-myo-inositol-4,5-bisphosphate) + H2O = 1D-myo-inositol 1,4,5-trisphosphate + a 1,2-diacyl-sn-glycerol + H(+). The catalysed reaction is sn-glycerol 3-phosphocholine + H2O = sn-glycerol 3-phosphate + choline + H(+). Activated by PRDX1 by reduction of an intramolecular disulfide bond. In terms of biological role, glycerophosphodiester phosphodiesterase that promotes cell cycle exit and drives spinal motor neuron differentiation. Mediates the cleavage of glycosylphosphatidylinositol (GPI) anchor of target proteins: removes the GPI-anchor of RECK, leading to release RECK from the plasma membrane. May contribute to the osmotic regulation of cellular glycerophosphocholine. This Gallus gallus (Chicken) protein is Glycerophosphodiester phosphodiesterase domain-containing protein 5 (GDPD5).